Here is a 1834-residue protein sequence, read N- to C-terminus: Sodium channel protein type 4 subunit alpha (1834 aa).

The Cytoplasmic segment spans residues M1 to S131. An I repeat occupies M113–N448. The helical transmembrane segment at L132–M150 threads the bilayer. Residues S151–P157 are Extracellular-facing. A helical transmembrane segment spans residues I158 to A178. Residues R179–P192 lie on the Cytoplasmic side of the membrane. A helical transmembrane segment spans residues W193–V210. Residues D211–S216 lie on the Extracellular side of the membrane. N214 is a glycosylation site (N-linked (GlcNAc...) asparagine). A helical membrane pass occupies residues A217–I233. Residues P234–D252 are Cytoplasmic-facing. Residues V253–F272 form a helical membrane-spanning segment. Residues M273–T385 are Extracellular-facing. C280 and C354 are joined by a disulfide. Residues N288, N291, N297, N303, N309, N327, and N356 are each glycosylated (N-linked (GlcNAc...) asparagine). A disulfide bridge links C363 with C369. Positions F386 to L410 form an intramembrane region, pore-forming. Residues R411–Y417 lie on the Extracellular side of the membrane. The chain crosses the membrane as a helical span at residues M418–A438. Residues V439–P572 are Cytoplasmic-facing. Residues E486–S525 are disordered. One copy of the II repeat lies at C554 to G826. The helical transmembrane segment at F573–M591 threads the bilayer. Residues E592–K602 lie on the Extracellular side of the membrane. The chain crosses the membrane as a helical span at residues V603–K622. At L623–W636 the chain is on the cytoplasmic side. Residues N637 to V656 traverse the membrane as a helical segment. Over K657–G658 the chain is Extracellular. A helical membrane pass occupies residues L659–S676. Residues W677–G692 lie on the Cytoplasmic side of the membrane. Residues G693–V711 traverse the membrane as a helical segment. At G712–D740 the chain is on the extracellular side. The cysteines at positions 725 and 731 are disulfide-linked. An intramembrane region (pore-forming) is located at residues F741 to W761. At G762–F772 the chain is on the extracellular side. Residues L773–F791 traverse the membrane as a helical segment. Topologically, residues L792–W1029 are cytoplasmic. Disordered stretches follow at residues G853–K886 and S929–E989. A compositionally biased stretch (acidic residues) spans E860 to P869. A compositionally biased stretch (basic and acidic residues) spans E870–K886. 2 stretches are compositionally biased toward acidic residues: residues S929–P945 and E972–E989. An III repeat occupies R1010–L1323. Residues F1030–F1047 traverse the membrane as a helical segment. The Extracellular segment spans residues E1048 to T1060. The chain crosses the membrane as a helical span at residues I1061–L1079. Over K1080–A1093 the chain is Cytoplasmic. The helical transmembrane segment at W1094 to N1112 threads the bilayer. Topologically, residues W1113–G1120 are extracellular. The chain crosses the membrane as a helical span at residues P1121–R1139. At F1140–S1156 the chain is on the cytoplasmic side. Residues I1157 to V1176 form a helical membrane-spanning segment. Residues N1177–V1227 are Extracellular-facing. N-linked (GlcNAc...) asparagine glycans are attached at residues N1188 and N1202. The pore-forming intramembrane region spans G1228 to S1249. Residues A1250–I1266 are Extracellular-facing. The chain crosses the membrane as a helical span at residues Y1267–I1288. At R1289–V1351 the chain is on the cytoplasmic side. The tract at residues I1307–M1309 is important for rapid channel inactivation. One copy of the IV repeat lies at I1332 to Q1630. The chain crosses the membrane as a helical span at residues F1352–V1369. Residues E1370–D1380 lie on the Extracellular side of the membrane. A helical membrane pass occupies residues I1381 to L1399. Residues K1400 to V1411 lie on the Cytoplasmic side of the membrane. A helical transmembrane segment spans residues G1412 to A1429. The Extracellular portion of the chain corresponds to L1430–T1442. Residues L1443 to I1459 traverse the membrane as a helical segment. Over R1460 to A1478 the chain is Cytoplasmic. A helical transmembrane segment spans residues L1479 to F1496. The Extracellular portion of the chain corresponds to G1497–T1518. An intramembrane region (pore-forming) is located at residues F1519–P1541. Over I1542–G1571 the chain is Extracellular. A disulfide bond links C1550 and C1565. Residues I1572–I1594 traverse the membrane as a helical segment. Topologically, residues L1595–V1834 are cytoplasmic. Positions E1724–H1753 constitute an IQ domain. Residues M1776–V1834 form a disordered region.

It belongs to the sodium channel (TC 1.A.1.10) family. Nav1.4/SCN4A subfamily. In terms of assembly, the Nav1.4 voltage-gated sodium channel consists of an ion-conducting alpha subunit SCN4A which is functional on its own and a regulatory beta subunit SCN1B. SCN1B strongly enhances the presence of SCN4A at the cell surface. SCN1B is also required for rapid channel inactivation and recovery after inactivation. It prevents the decrease of channel activity in response to repetitive, high-frequency depolarizations. Interacts with the syntrophins SNTA1, SNTB1 and SNTB2 (via PDZ domain); probably links SCN4A to the actin cytoskeleton and the extracellular matrix via the dystrophin-associated protein complex and regulates its localization in muscle cells. Interacts with TMEM233; probable regulator of the channel.

The protein resides in the cell membrane. The enzyme catalyses Na(+)(in) = Na(+)(out). In terms of biological role, pore-forming subunit of Nav1.4, a voltage-gated sodium (Nav) channel that directly mediates the depolarizing phase of action potentials in excitable membranes. Navs, also called VGSCs (voltage-gated sodium channels) or VDSCs (voltage-dependent sodium channels), operate by switching between closed and open conformations depending on the voltage difference across the membrane. In the open conformation they allow Na(+) ions to selectively pass through the pore, along their electrochemical gradient. The influx of Na+ ions provokes membrane depolarization, initiating the propagation of electrical signals throughout cells and tissues. Highly expressed in skeletal muscles, Nav1.4 generates the action potential crucial for muscle contraction. The polypeptide is Sodium channel protein type 4 subunit alpha (Equus caballus (Horse)).